A 242-amino-acid polypeptide reads, in one-letter code: MASGWFYLSCMVLGSLGSMCILFTAYWMQYWRGGFAWDGTVLMFNWHPVLMVAGMVVLYGAASLVYRLPSSWVGPRLPWKVLHAALHLLAFTCTVVGLIAVFRFHNHSRIAHLYSLHSWLGITTVVLFACQWFLGFAVFLLPWASQWLRSLLKPLHVFFGACILSLSITSVISGINEKLFFVLKNATKPYSSLPGEAVFANSTGLLVVAFGLLVLYVLLASSWKRPDPGALTDRQPLLHDRE.

Residues 1-4 are Cytoplasmic-facing; that stretch reads MASG. The helical transmembrane segment at 5–25 threads the bilayer; the sequence is WFYLSCMVLGSLGSMCILFTA. In terms of domain architecture, Cytochrome b561 spans 12-219; sequence VLGSLGSMCI…FGLLVLYVLL (208 aa). At 26-40 the chain is on the lumenal side; it reads YWMQYWRGGFAWDGT. The helical transmembrane segment at 41–61 threads the bilayer; sequence VLMFNWHPVLMVAGMVVLYGA. Heme b is bound by residues H47 and R67. Residues 62–81 lie on the Cytoplasmic side of the membrane; the sequence is ASLVYRLPSSWVGPRLPWKV. R76 and K80 together coordinate L-ascorbate. A helical transmembrane segment spans residues 82–102; it reads LHAALHLLAFTCTVVGLIAVF. Heme b-binding positions include H83, 112-115, and H117; that span reads HLYS. The Lumenal portion of the chain corresponds to 103 to 119; sequence RFHNHSRIAHLYSLHSW. A helical transmembrane segment spans residues 120 to 140; that stretch reads LGITTVVLFACQWFLGFAVFL. The Cytoplasmic segment spans residues 141–154; that stretch reads LPWASQWLRSLLKP. Residue R149 coordinates L-ascorbate. Residues 155-175 form a helical membrane-spanning segment; it reads LHVFFGACILSLSITSVISGI. Heme b-binding residues include H156 and E177. Topologically, residues 176–202 are lumenal; sequence NEKLFFVLKNATKPYSSLPGEAVFANS. A helical transmembrane segment spans residues 203–223; the sequence is TGLLVVAFGLLVLYVLLASSW. Residue K224 participates in heme b binding. Residues 224 to 242 lie on the Cytoplasmic side of the membrane; the sequence is KRPDPGALTDRQPLLHDRE.

As to quaternary structure, homodimer. It depends on heme b as a cofactor. In terms of processing, N-glycosylated. In terms of tissue distribution, present in lung, spleen, thymus and testis. Present at low level in brain, heart, liver and kidney. Expressed in the alveolar macrophages of the lung, in the white pulp of the spleen, widespread in the thymus, and in the Sertoli cells of the testis (at protein level).

The protein resides in the late endosome membrane. It localises to the lysosome membrane. It carries out the reaction Fe(3+)(out) + L-ascorbate(in) = monodehydro-L-ascorbate radical(in) + Fe(2+)(out) + H(+). In terms of biological role, transmembrane reductase that uses ascorbate as an electron donor in the cytoplasm and transfers electrons across membranes to reduce iron cations Fe(3+) into Fe(2+) in the lumen of the late endosome and lysosome. Reduced iron can then be extruded from the late endosome and lysosome to the cytoplasm by divalent metal-specific transporters. It is therefore most probably involved in endosomal and lysosomal cellular iron homeostasis. The protein is Lysosomal membrane ascorbate-dependent ferrireductase CYB561A3 of Mus musculus (Mouse).